The chain runs to 357 residues: Protein-glutamate methylesterase/protein-glutamine glutaminase (357 aa).

A Response regulatory domain is found at 3–120; sequence RVIVVDDSAF…LASMDLAALS (118 aa). The residue at position 54 (aspartate 54) is a 4-aspartylphosphate. A CheB-type methylesterase domain is found at 165-357; it reads ERSRRDIIAI…AERVASALYK (193 aa). Active-site residues include serine 177, histidine 204, and aspartate 300.

Belongs to the CheB family. Post-translationally, phosphorylated by CheA. Phosphorylation of the N-terminal regulatory domain activates the methylesterase activity.

Its subcellular location is the cytoplasm. The catalysed reaction is [protein]-L-glutamate 5-O-methyl ester + H2O = L-glutamyl-[protein] + methanol + H(+). The enzyme catalyses L-glutaminyl-[protein] + H2O = L-glutamyl-[protein] + NH4(+). Its function is as follows. Involved in chemotaxis. Part of a chemotaxis signal transduction system that modulates chemotaxis in response to various stimuli. Catalyzes the demethylation of specific methylglutamate residues introduced into the chemoreceptors (methyl-accepting chemotaxis proteins or MCP) by CheR. Also mediates the irreversible deamidation of specific glutamine residues to glutamic acid. This chain is Protein-glutamate methylesterase/protein-glutamine glutaminase, found in Lawsonia intracellularis (strain PHE/MN1-00).